The following is a 254-amino-acid chain: 3-deoxy-manno-octulosonate cytidylyltransferase (254 aa).

The protein belongs to the KdsB family.

It is found in the cytoplasm. It catalyses the reaction 3-deoxy-alpha-D-manno-oct-2-ulosonate + CTP = CMP-3-deoxy-beta-D-manno-octulosonate + diphosphate. It participates in nucleotide-sugar biosynthesis; CMP-3-deoxy-D-manno-octulosonate biosynthesis; CMP-3-deoxy-D-manno-octulosonate from 3-deoxy-D-manno-octulosonate and CTP: step 1/1. Functionally, activates KDO (a required 8-carbon sugar) for incorporation into bacterial lipopolysaccharide in Gram-negative bacteria. In Lawsonia intracellularis (strain PHE/MN1-00), this protein is 3-deoxy-manno-octulosonate cytidylyltransferase.